Here is a 1028-residue protein sequence, read N- to C-terminus: U2 snRNP-associated SURP motif-containing protein (1028 aa).

Disordered stretches follow at residues 1 to 111 and 141 to 272; these read MADK…EDEK and VNAA…DPST. The residue at position 2 (A2) is an N-acetylalanine. Over residues 7 to 16 the composition is skewed to polar residues; the sequence is GGSQKASSKT. Basic residues predominate over residues 45-54; it reads TRPKSPRKHN. Residues 55–64 are compositionally biased toward basic and acidic residues; it reads YRNESARESL. S67 bears the Phosphoserine mark. K80 is covalently cross-linked (Glycyl lysine isopeptide (Lys-Gly) (interchain with G-Cter in SUMO2)). Residues 92-121 are a coiled coil; that stretch reads AKRTLSKKEQEELKKKEDEKAAAEIYEEFL. Composition is skewed to basic and acidic residues over residues 97-111 and 144-155; these read SKKEQEELKKKEDEK and AKEEHETDEKRG. Residues K145 and K168 each participate in a glycyl lysine isopeptide (Lys-Gly) (interchain with G-Cter in SUMO2) cross-link. A compositionally biased stretch (polar residues) spans 169–178; that stretch reads NPPNQSSNER. The span at 186 to 222 shows a compositional bias: basic and acidic residues; the sequence is ETKKPPLKKGEKEKKKSNLELFKEELKQIQEERDERH. Positions 192-232 form a coiled coil; sequence LKKGEKEKKKSNLELFKEELKQIQEERDERHKTKGRLSRFE. S202 carries the post-translational modification Phosphoserine. Residue K208 forms a Glycyl lysine isopeptide (Lys-Gly) (interchain with G-Cter in SUMO2) linkage. S236 carries the post-translational modification Phosphoserine. The span at 239 to 249 shows a compositional bias: basic and acidic residues; that stretch reads DGQRRSMDAPS. Residues 273-354 enclose the RRM domain; sequence TNLYLGNINP…FEMKLGWGKA (82 aa). One copy of the SURP motif repeat lies at 429–472; sequence LIHRMIEFVVREGPMFEAMIMNREINNPMFRFLFENQTPAHVYY. Position 484 is a phosphoserine (S484). A CID domain is found at 533-678; it reads LKEEQRDKLE…KLQNIFLGLV (146 aa). T718 carries the phosphothreonine modification. Residues K747 and K748 each participate in a glycyl lysine isopeptide (Lys-Gly) (interchain with G-Cter in SUMO2) cross-link. At K759 the chain carries N6-acetyllysine; alternate. K759 is covalently cross-linked (Glycyl lysine isopeptide (Lys-Gly) (interchain with G-Cter in SUMO2); alternate). 2 disordered regions span residues 777–840 and 854–1028; these read KWEL…EEKR and QDEL…KNKH. Residues 779 to 809 are a coiled coil; sequence ELFDQHEESEEEENQNQEEESEDEEDTQSSK. Acidic residues predominate over residues 785 to 805; sequence EESEEEENQNQEEESEDEEDT. Residues S787, S799, and S810 each carry the phosphoserine modification. Basic and acidic residues-rich tracts occupy residues 809–840 and 873–921; these read KSEEHHLYSNPIKEEMTESKFSKYSEMSEEKR and QVEH…TPTR. Residues K821, K828, and K831 each participate in a glycyl lysine isopeptide (Lys-Gly) (interchain with G-Cter in SUMO2) cross-link. Residues 836–914 are a coiled coil; that stretch reads SEEKRAKLRE…ESRSKDEKEK (79 aa). T930 is subject to Phosphothreonine. Residues S945 and S947 each carry the phosphoserine modification. Residues 949-979 are compositionally biased toward basic and acidic residues; the sequence is KSERSERSERSHKESSRSRSSHKDSPRDVSK. The span at 990–1028 shows a compositional bias: basic residues; sequence TPKRSRRSRSRSPKKSGKKSRSQSRSPHRSHKKSKKNKH.

This sequence belongs to the splicing factor SR family. As to quaternary structure, interacts with ERBB4.

The protein resides in the nucleus. This Pongo abelii (Sumatran orangutan) protein is U2 snRNP-associated SURP motif-containing protein (U2SURP).